The primary structure comprises 160 residues: Secreted RxLR effector protein 83 (160 aa).

An N-terminal signal peptide occupies residues 1-21 (MLVLLAATFFIYISRLTSTDA). Positions 27-30 (RGLR) match the RxLR motif. Residues asparagine 39 and asparagine 131 are each glycosylated (N-linked (GlcNAc...) asparagine).

This sequence belongs to the RxLR effector family.

The protein localises to the secreted. Its subcellular location is the host nucleus. It is found in the host cytoplasm. Secreted effector that completely suppresses the host cell death induced by cell death-inducing proteins. This chain is Secreted RxLR effector protein 83, found in Plasmopara viticola (Downy mildew of grapevine).